We begin with the raw amino-acid sequence, 109 residues long: Biphenyl dioxygenase ferredoxin subunit (109 aa).

The Rieske domain maps to 4-100; the sequence is TKACSVDEVP…IRIEGRDVLV (97 aa). Residues Cys-43, His-45, Cys-63, and His-66 each contribute to the [2Fe-2S] cluster site.

This sequence belongs to the bacterial ring-hydroxylating dioxygenase ferredoxin component family. In terms of assembly, this dioxygenase system consists of four proteins: the two subunits of the hydroxylase component (BphA1 and BphA2), a ferredoxin (BphA3) and a ferredoxin reductase (BphA4).

In terms of biological role, this protein seems to be a 2Fe-2S ferredoxin. The chain is Biphenyl dioxygenase ferredoxin subunit (bphA3) from Pseudomonas sp. (strain KKS102).